We begin with the raw amino-acid sequence, 160 residues long: Ribosomal RNA large subunit methyltransferase H (160 aa).

Residues Leu76 and Gly108 each contribute to the S-adenosyl-L-methionine site.

This sequence belongs to the RNA methyltransferase RlmH family. In terms of assembly, homodimer.

It localises to the cytoplasm. It catalyses the reaction pseudouridine(1915) in 23S rRNA + S-adenosyl-L-methionine = N(3)-methylpseudouridine(1915) in 23S rRNA + S-adenosyl-L-homocysteine + H(+). In terms of biological role, specifically methylates the pseudouridine at position 1915 (m3Psi1915) in 23S rRNA. In Nitrobacter winogradskyi (strain ATCC 25391 / DSM 10237 / CIP 104748 / NCIMB 11846 / Nb-255), this protein is Ribosomal RNA large subunit methyltransferase H.